The following is a 287-amino-acid chain: Ribonuclease Z (287 aa).

Residues H64, H66, D68, H69, H124, D191, and H250 each coordinate Zn(2+). D68 acts as the Proton acceptor in catalysis.

This sequence belongs to the RNase Z family. In terms of assembly, homodimer. It depends on Zn(2+) as a cofactor.

It catalyses the reaction Endonucleolytic cleavage of RNA, removing extra 3' nucleotides from tRNA precursor, generating 3' termini of tRNAs. A 3'-hydroxy group is left at the tRNA terminus and a 5'-phosphoryl group is left at the trailer molecule.. In terms of biological role, zinc phosphodiesterase, which displays some tRNA 3'-processing endonuclease activity. Probably involved in tRNA maturation, by removing a 3'-trailer from precursor tRNA. This is Ribonuclease Z from Pyrobaculum aerophilum (strain ATCC 51768 / DSM 7523 / JCM 9630 / CIP 104966 / NBRC 100827 / IM2).